A 493-amino-acid chain; its full sequence is Glycogen synthase 1 (493 aa).

Lys-15 lines the ADP-alpha-D-glucose pocket.

Belongs to the glycosyltransferase 1 family. Bacterial/plant glycogen synthase subfamily.

It carries out the reaction [(1-&gt;4)-alpha-D-glucosyl](n) + ADP-alpha-D-glucose = [(1-&gt;4)-alpha-D-glucosyl](n+1) + ADP + H(+). It functions in the pathway glycan biosynthesis; glycogen biosynthesis. Functionally, synthesizes alpha-1,4-glucan chains using ADP-glucose. The sequence is that of Glycogen synthase 1 from Methylococcus capsulatus (strain ATCC 33009 / NCIMB 11132 / Bath).